A 241-amino-acid chain; its full sequence is Phycocyanobilin:ferredoxin oxidoreductase (241 aa).

It belongs to the HY2 family.

It catalyses the reaction (2R,3Z)-phycocyanobilin + 4 oxidized [2Fe-2S]-[ferredoxin] = biliverdin IXalpha + 4 reduced [2Fe-2S]-[ferredoxin] + 4 H(+). In terms of biological role, catalyzes the four-electron reduction of biliverdin IX-alpha (2-electron reduction at both the A and D rings); the reaction proceeds via an isolatable 2-electron intermediate, 181,182-dihydrobiliverdin. In Prochlorococcus marinus (strain MIT 9215), this protein is Phycocyanobilin:ferredoxin oxidoreductase.